Here is a 466-residue protein sequence, read N- to C-terminus: Cysteine--tRNA ligase (466 aa).

A Zn(2+)-binding site is contributed by C28. A 'HIGH' region motif is present at residues 30-40; it reads PTVYNFFHIGN. The Zn(2+) site is built by C208, H233, and E237. The 'KMSKS' region motif lies at 265–269; it reads KMSKS. K268 contributes to the ATP binding site.

This sequence belongs to the class-I aminoacyl-tRNA synthetase family. As to quaternary structure, monomer. Requires Zn(2+) as cofactor.

It is found in the cytoplasm. The catalysed reaction is tRNA(Cys) + L-cysteine + ATP = L-cysteinyl-tRNA(Cys) + AMP + diphosphate. The sequence is that of Cysteine--tRNA ligase from Clostridium perfringens (strain 13 / Type A).